A 188-amino-acid chain; its full sequence is Large ribosomal subunit protein uL5 (188 aa).

It belongs to the universal ribosomal protein uL5 family. As to quaternary structure, part of the 50S ribosomal subunit; contacts the 5S rRNA and probably tRNA. Forms a bridge to the 30S subunit in the 70S ribosome.

In terms of biological role, this is one of the proteins that bind and probably mediate the attachment of the 5S RNA into the large ribosomal subunit, where it forms part of the central protuberance. In the 70S ribosome it contacts protein S13 of the 30S subunit (bridge B1b), connecting the 2 subunits; this bridge is implicated in subunit movement. May contact the P site tRNA; the 5S rRNA and some of its associated proteins might help stabilize positioning of ribosome-bound tRNAs. This is Large ribosomal subunit protein uL5 from Pyrococcus abyssi (strain GE5 / Orsay).